A 158-amino-acid polypeptide reads, in one-letter code: 6,7-dimethyl-8-ribityllumazine synthase (158 aa).

5-amino-6-(D-ribitylamino)uracil contacts are provided by residues phenylalanine 22, 57–59 (AVE), and 81–83 (AVI). 86–87 (GT) provides a ligand contact to (2S)-2-hydroxy-3-oxobutyl phosphate. Histidine 89 functions as the Proton donor in the catalytic mechanism. 5-amino-6-(D-ribitylamino)uracil is bound at residue phenylalanine 114. (2S)-2-hydroxy-3-oxobutyl phosphate is bound at residue arginine 128.

This sequence belongs to the DMRL synthase family. As to quaternary structure, forms an icosahedral capsid composed of 60 subunits, arranged as a dodecamer of pentamers.

The enzyme catalyses (2S)-2-hydroxy-3-oxobutyl phosphate + 5-amino-6-(D-ribitylamino)uracil = 6,7-dimethyl-8-(1-D-ribityl)lumazine + phosphate + 2 H2O + H(+). It functions in the pathway cofactor biosynthesis; riboflavin biosynthesis; riboflavin from 2-hydroxy-3-oxobutyl phosphate and 5-amino-6-(D-ribitylamino)uracil: step 1/2. Catalyzes the formation of 6,7-dimethyl-8-ribityllumazine by condensation of 5-amino-6-(D-ribitylamino)uracil with 3,4-dihydroxy-2-butanone 4-phosphate. This is the penultimate step in the biosynthesis of riboflavin. This Shewanella putrefaciens (strain CN-32 / ATCC BAA-453) protein is 6,7-dimethyl-8-ribityllumazine synthase.